The primary structure comprises 715 residues: MDLTLSRADYLQVGVTSQKTMKLLPTSRQRATQKVVVGDQDGVVICFGVKKGEAVPVFKTLPGQKISRLELGGAVNTPQEKIFIAAGSEIRGFTKRGKQFLSFETNLTESIKAMYISGSDLFLSASYIYNHYCDCKDQNYYLSGDKINDVICLPVEKLSRVTPVLACQDRVLRVLQGSDVMYEIEVPGPPTVLALHNGDGGDSGEGLLFGTSDGRLGLIQITTSKPIHKWEIRNDKKRGGILCVDSFDIMGDGVKDLLVGRDDGMVEVYSFENANEPVLRFDQMLSESVTSIQGGCVGKDGYDEIVLATYSGWVTGLTTEPTHKESGPGEELKLNQEMQNKISSLRSEIEHLQFKVLQERENYQQSSQSSQAKSTVPSFSINDKFTLNKEDASYSLVLEVRTAIDNVLIQSDVPIDLLDVDKNSAVVSFSSCDTESNDNFLLATYRCQANTTRLELKIRSIEGQYGTLQAYVTPRIQPKTCQVRQYHIKPLSLHQRTHFIDHDRPMNTLTLTGQFSFAEVHSWVVFCLPEVPEKPPAGECATFYFQNTFLDTQLECVYRKGEGVFKSDNISTISILKDVLSKEATKRKINLNISYEINEVSVKHTLKLIHPKLEYQLLLAKKVQLIDALKELQVHEGNTDFLTPEYRCILEEADHLQEEYKKQPAHLERLYGMITDLFIDKFKFKGTNVKTKVPMLLEILDSYDQNTLISFFDAA.

Residue methionine 1 is modified to N-acetylmethionine.

Part of BBSome complex, that contains BBS1, BBS2, BBS4, BBS5, BBS7, BBS8/TTC8, BBS9 and BBIP10. Interacts with BBS2 (via C-terminus). Interacts with CCDC28B. Interacts with SMO; the interaction is indicative for the association of SMO with the BBsome complex to facilitate ciliary localization of SMO.

It is found in the cell projection. The protein resides in the cilium membrane. It localises to the cytoplasm. The protein localises to the cytoskeleton. Its subcellular location is the microtubule organizing center. It is found in the centrosome. The protein resides in the centriolar satellite. It localises to the cilium basal body. Functionally, the BBSome complex is thought to function as a coat complex required for sorting of specific membrane proteins to the primary cilia. The BBSome complex is required for ciliogenesis but is dispensable for centriolar satellite function. This ciliogenic function is mediated in part by the Rab8 GDP/GTP exchange factor, which localizes to the basal body and contacts the BBSome. Rab8(GTP) enters the primary cilium and promotes extension of the ciliary membrane. Firstly the BBSome associates with the ciliary membrane and binds to RAB3IP/Rabin8, the guanosyl exchange factor (GEF) for Rab8 and then the Rab8-GTP localizes to the cilium and promotes docking and fusion of carrier vesicles to the base of the ciliary membrane. The BBSome complex, together with the LTZL1, controls SMO ciliary trafficking and contributes to the sonic hedgehog (SHH) pathway regulation. Required for BBSome complex ciliary localization but not for the proper complex assembly. The polypeptide is BBSome complex member BBS7 (Bbs7) (Mus musculus (Mouse)).